Reading from the N-terminus, the 114-residue chain is Superoxide dismutase [Cu-Zn] (114 aa).

Cu cation-binding residues include His37, His39, and His54. The disordered stretch occupies residues 49 to 73 (MSSGPHYNPRNKEHGAPTDENRHLG). Zn(2+) is bound by residues His54, His62, His71, and Asp74. Positions 58-73 (RNKEHGAPTDENRHLG) are enriched in basic and acidic residues. His111 is a binding site for Cu cation.

This sequence belongs to the Cu-Zn superoxide dismutase family. As to quaternary structure, homodimer. Cu cation is required as a cofactor. It depends on Zn(2+) as a cofactor.

It is found in the cytoplasm. The catalysed reaction is 2 superoxide + 2 H(+) = H2O2 + O2. Destroys radicals which are normally produced within the cells and which are toxic to biological systems. This is Superoxide dismutase [Cu-Zn] from Drosophila madeirensis (Fruit fly).